Reading from the N-terminus, the 250-residue chain is Sulfate transporter CysZ (250 aa).

4 helical membrane passes run 27–47, 64–84, 150–170, and 210–230; these read FVVL…YYLF, FLSW…LATF, FLLL…WFLF, and MLVA…PVAV.

It belongs to the CysZ family.

It localises to the cell inner membrane. In terms of biological role, high affinity, high specificity proton-dependent sulfate transporter, which mediates sulfate uptake. Provides the sulfur source for the cysteine synthesis pathway. The chain is Sulfate transporter CysZ from Vibrio cholerae serotype O1 (strain ATCC 39315 / El Tor Inaba N16961).